We begin with the raw amino-acid sequence, 715 residues long: Fatty acid oxidation complex subunit alpha (715 aa).

Residues 1-190 (MIYQGKAITV…KVGAVDAVVA (190 aa)) are enoyl-CoA hydratase/isomerase. Aspartate 297 provides a ligand contact to substrate. The interval 312–715 (KDVKLAAVLG…MAKNGQKFFG (404 aa)) is 3-hydroxyacyl-CoA dehydrogenase. Residues methionine 325, aspartate 344, 401 to 403 (VVE), lysine 408, and serine 430 each bind NAD(+). Histidine 451 functions as the For 3-hydroxyacyl-CoA dehydrogenase activity in the catalytic mechanism. Asparagine 454 serves as a coordination point for NAD(+). Asparagine 501 and tyrosine 660 together coordinate substrate.

This sequence in the N-terminal section; belongs to the enoyl-CoA hydratase/isomerase family. The protein in the C-terminal section; belongs to the 3-hydroxyacyl-CoA dehydrogenase family. As to quaternary structure, heterotetramer of two alpha chains (FadB) and two beta chains (FadA).

It carries out the reaction a (3S)-3-hydroxyacyl-CoA + NAD(+) = a 3-oxoacyl-CoA + NADH + H(+). The enzyme catalyses a (3S)-3-hydroxyacyl-CoA = a (2E)-enoyl-CoA + H2O. It catalyses the reaction a 4-saturated-(3S)-3-hydroxyacyl-CoA = a (3E)-enoyl-CoA + H2O. The catalysed reaction is (3S)-3-hydroxybutanoyl-CoA = (3R)-3-hydroxybutanoyl-CoA. It carries out the reaction a (3Z)-enoyl-CoA = a 4-saturated (2E)-enoyl-CoA. The enzyme catalyses a (3E)-enoyl-CoA = a 4-saturated (2E)-enoyl-CoA. Its pathway is lipid metabolism; fatty acid beta-oxidation. In terms of biological role, involved in the aerobic and anaerobic degradation of long-chain fatty acids via beta-oxidation cycle. Catalyzes the formation of 3-oxoacyl-CoA from enoyl-CoA via L-3-hydroxyacyl-CoA. It can also use D-3-hydroxyacyl-CoA and cis-3-enoyl-CoA as substrate. This is Fatty acid oxidation complex subunit alpha from Pseudomonas paraeruginosa (strain DSM 24068 / PA7) (Pseudomonas aeruginosa (strain PA7)).